The primary structure comprises 384 residues: Prostaglandin E synthase 2 (384 aa).

The Lumenal segment spans residues 1–56 (MAQAARLSWVLVSSRCALTEGLLTRPWQPLSAQSRAGFTRVAAGSRGAAVRKGSPR). Residues 57–73 (LLGAAALALGGALGLYH) form a helical membrane-spanning segment. The Cytoplasmic portion of the chain corresponds to 74-384 (TVRWHQRSQD…VHHVNPSCKD (311 aa)). The region spanning 89–192 (SAAQLPLSNS…EVITYYPPMK (104 aa)) is the Glutaredoxin domain. Glutathione-binding positions include V147 and 163-164 (DS). The region spanning 262 to 376 (YIVREGKFGA…RAIEEAPSVH (115 aa)) is the GST C-terminal domain.

The protein belongs to the GST superfamily. As to quaternary structure, homodimer. Interacts with EXOSC10. May interact with CEBPB. Post-translationally, synthesized as a Golgi membrane-associated protein, and the proteolytic removal of the N-terminal hydrophobic domain leads to the formation of a mature cytosolic enzyme. As to expression, widely expressed. Expressed in brain, heart, liver, colon and lung.

The protein resides in the golgi apparatus membrane. Its subcellular location is the nucleus. It is found in the cytoplasm. The enzyme catalyses prostaglandin H2 = prostaglandin E2. It carries out the reaction prostaglandin H2 = (12S)-hydroxy-(5Z,8E,10E)-heptadecatrienoate + malonaldehyde. It participates in lipid metabolism; prostaglandin biosynthesis. Its activity is regulated as follows. Isomerase activity is increased by sulfhydril compounds. Dithiothreitol (DTT) is most effective, followed by glutathione (GSH) and 2-mercaptoethanol. Its function is as follows. Isomerase that catalyzes the conversion of PGH2 into the more stable prostaglandin E2 (PGE2) (in vitro). The biological function and the GSH-dependent property of PTGES2 is still under debate. In vivo, PTGES2 could form a complex with GSH and heme and would not participate in PGE2 synthesis but would catalyze the degradation of prostaglandin E2 H2 (PGH2) to 12(S)-hydroxy-5(Z),8(E),10(E)-heptadecatrienoic acid (HHT) and malondialdehyde (MDA). May also have transactivation activity toward IFN-gamma (IFNG), possibly via an interaction with CEBPB; however, the relevance of transcription activation activity remains unclear. In Mus musculus (Mouse), this protein is Prostaglandin E synthase 2 (Ptges2).